The chain runs to 59 residues: Photosystem II reaction center protein K (59 aa).

A propeptide spanning residues 1 to 22 is cleaved from the precursor; it reads MLNIFSLIGLNSALYSSSCFFA. Residues 30-50 traverse the membrane as a helical segment; that stretch reads FLSPIVDFMPVIPLLFFLLAF.

The protein belongs to the PsbK family. As to quaternary structure, PSII is composed of 1 copy each of membrane proteins PsbA, PsbB, PsbC, PsbD, PsbE, PsbF, PsbH, PsbI, PsbJ, PsbK, PsbL, PsbM, PsbT, PsbX, PsbY, PsbZ, Psb30/Ycf12, at least 3 peripheral proteins of the oxygen-evolving complex and a large number of cofactors. It forms dimeric complexes.

The protein localises to the plastid. The protein resides in the chloroplast thylakoid membrane. One of the components of the core complex of photosystem II (PSII). PSII is a light-driven water:plastoquinone oxidoreductase that uses light energy to abstract electrons from H(2)O, generating O(2) and a proton gradient subsequently used for ATP formation. It consists of a core antenna complex that captures photons, and an electron transfer chain that converts photonic excitation into a charge separation. This is Photosystem II reaction center protein K from Silene latifolia (White campion).